The primary structure comprises 828 residues: MSTFSLENCLNGSYGVDTPEEVTFIRRRDANPSAFHGEETVPSNTTEVHSESVSYSSDFEGYSCDSDFTGDNQYSSFDGADSLLLSYDIDEYIDLSESELRVLFDEMVQPIHFGMVLSPTFSRNRFLSCLSLAKSVVVAPLYDPERTLRPFPELVKNLYSGVHDIYLSDSEEAAISSVTDTIEGYTFSPRDVVDNYEPPPLCSVCGLIAYQCPHYDINSLRKNCAEMTIAHDYPIEGLCGLIDDATLLKNLGSFLLPIQCEYTKLPEPTLITPPELTRPTDRVTVDLLQAICDSTLPTHVCYDDTYHQTFIENADYSVDIDRVRLKQSDLLAKVIDEGHLKPVLNTGSGQKRIGTTREVLCAIKKRNADVPELCGSVNLKRLSDDVAECFMLSFMNGDKLCSSNFINIVSDFHAYMSKWQSVLSYDDLPDLNAENLQFYEHMVKSDVKPSVTDTLNIDRPLPATITFHRKQLTSQFSPLFTALFQRFQRCLTKRVILPVGKISSLEIKDFSVLNKFCLEIDLSKFDKSQGELHLMIQEGILNRLGCPVHISKWWCDFHRMSYIKDKRAGVSMPISFQRRTGDAFTYFGNTLVTMSMFAWCYDTSQFDKLIFSGDDSLGFSIKAPVGDPSLFTSLFNMEAKVMEPSVPYICSKFLLTDDFGNTFSVPDPLREIQRLGSKKIPLDEDDRSLHAHFMSFVDRLKFLNHMNQTSMTQLSLFYEMKYRKSGDDILLVLGAFNKYTANFNAYKELYYSEKQQCALINSFSISDLIVGRGKSSKASRRKAVESNGKHRDPSTRDHSKVGTDESKETSTEETTQTEPQGAGSQKSK.

The RdRp catalytic domain maps to 515–628 (KFCLEIDLSK…FSIKAPVGDP (114 aa)). Residues 776 to 828 (SKASRRKAVESNGKHRDPSTRDHSKVGTDESKETSTEETTQTEPQGAGSQKSK) are disordered. A compositionally biased stretch (basic and acidic residues) spans 782-810 (KAVESNGKHRDPSTRDHSKVGTDESKETS).

The protein belongs to the ssRNA positive-strand viruses RNA-directed RNA polymerase family. Interacts with replication protein 1a.

The catalysed reaction is RNA(n) + a ribonucleoside 5'-triphosphate = RNA(n+1) + diphosphate. Its function is as follows. RNA-dependent RNA polymerase which replicates the viral genome composed of 3 RNA segments, RNA1, RNA2 and RNA3. The chain is RNA-directed RNA polymerase 2a from Canna (Florist's daisy).